The primary structure comprises 118 residues: NADH dehydrogenase [ubiquinone] iron-sulfur protein 5-A (118 aa).

Residues 46–87 (KGRCYDFWMDFSECMSHCREPKDCTLLREDYLECLHHSKEFQ) form the CHCH domain. 2 short sequence motifs (cx9C motif) span residues 49 to 59 (CYDFWMDFSEC) and 69 to 79 (CTLLREDYLEC). Intrachain disulfides connect Cys49–Cys79 and Cys59–Cys69. A disordered region spans residues 98-118 (RKLRAASRKGEEAGDGTHNHH).

Belongs to the complex I NDUFS5 subunit family. In terms of assembly, complex I is composed of at least 49 different subunits. This is a component of the iron-sulfur (IP) fragment of the enzyme.

It is found in the mitochondrion. The protein resides in the mitochondrion inner membrane. The protein localises to the mitochondrion intermembrane space. In terms of biological role, accessory subunit of the mitochondrial membrane respiratory chain NADH dehydrogenase (Complex I), that is believed not to be involved in catalysis. Complex I functions in the transfer of electrons from NADH to the respiratory chain. The immediate electron acceptor for the enzyme is believed to be ubiquinone. This chain is NADH dehydrogenase [ubiquinone] iron-sulfur protein 5-A, found in Arabidopsis thaliana (Mouse-ear cress).